Consider the following 492-residue polypeptide: Probable cobyric acid synthase (492 aa).

The 193-residue stretch at 252–444 (PIEVNIVKFS…FHGILENFEF (193 aa)) folds into the GATase cobBQ-type domain. C330 (nucleophile) is an active-site residue. H436 is a catalytic residue.

It belongs to the CobB/CobQ family. CobQ subfamily.

It participates in cofactor biosynthesis; adenosylcobalamin biosynthesis. Its function is as follows. Catalyzes amidations at positions B, D, E, and G on adenosylcobyrinic A,C-diamide. NH(2) groups are provided by glutamine, and one molecule of ATP is hydrogenolyzed for each amidation. The sequence is that of Probable cobyric acid synthase from Methanococcus maripaludis (strain C7 / ATCC BAA-1331).